We begin with the raw amino-acid sequence, 583 residues long: cAMP-dependent protein kinase catalytic subunit 3 (583 aa).

Disordered stretches follow at residues 51 to 75 (ATPTQRGKATGDNGTTGTPARTIGK) and 98 to 264 (SGTA…QTAK). Polar residues-rich tracts occupy residues 52-69 (TPTQRGKATGDNGTTGTP) and 98-107 (SGTAGSTSKL). The segment covering 108–162 (TTGNGSGNTMTSAYKIPSNNSTTANDSSNTETTFTFKLGRSNGRSSSNVASSESS) has biased composition (low complexity). Over residues 163 to 176 (DPLESDYSEEDPEQ) the composition is skewed to acidic residues. A compositionally biased stretch (low complexity) spans 181-200 (PDPATNSRSSSTATTTTTSS). A compositionally biased stretch (acidic residues) spans 205 to 219 (NDVDEEDEEDDENEG). Over residues 221 to 234 (GNGRDADDATHDSS) the composition is skewed to basic and acidic residues. The segment covering 235–256 (ESIEEDDGNETDDEEDDDESEE) has biased composition (acidic residues). The Protein kinase domain occupies 274–528 (YQIIKTVGTG…ADDVKRHRWF (255 aa)). Residues 280–288 (VGTGTFGRV) and K303 contribute to the ATP site. Catalysis depends on D397, which acts as the Proton acceptor. An AGC-kinase C-terminal domain is found at 529-583 (KHLNWNDVYSKKLKPPILPDVHHDGDTKNFDDYPEKDWKPAKAVDQRDLQYFNDF).

Belongs to the protein kinase superfamily. AGC Ser/Thr protein kinase family. cAMP subfamily. As to expression, expressed in embryonic mesoderm, and the optic lamina, wing disk and leg disks of third instar larvae. More abundant in adult head than adult body.

It carries out the reaction L-seryl-[protein] + ATP = O-phospho-L-seryl-[protein] + ADP + H(+). The catalysed reaction is L-threonyl-[protein] + ATP = O-phospho-L-threonyl-[protein] + ADP + H(+). Its function is as follows. Does not have an essential role in development. The chain is cAMP-dependent protein kinase catalytic subunit 3 (Pka-C3) from Drosophila melanogaster (Fruit fly).